The chain runs to 266 residues: MRLIPLTTAEQVGKWAARHIVNRINAFKPTADRPFVLGLPTGGTPMTTYKALVEMHKAGQVSFKHVVTFNMDEYVGLPKEHPESYYSFMHRNFFDHVDIPAENINLLNGNAPDIDAECRQYEEKIRSYGKIHLFMGGVGNDGHIAFNEPASSLASRTRIKTLTHDTRVANSRFFDNDVNQVPKYALTVGVGTLLDAEEVMILVLGSQKALALQAAVEGCVNHMWTISCLQLHPKAIMVCDEPSTMELKVKTLRYFNELEAENIKGL.

Catalysis depends on aspartate 72, which acts as the Proton acceptor; for enolization step. Residue aspartate 141 is the For ring-opening step of the active site. The active-site Proton acceptor; for ring-opening step is the histidine 143. Glutamate 148 (for ring-opening step) is an active-site residue.

The protein belongs to the glucosamine/galactosamine-6-phosphate isomerase family. NagB subfamily. As to quaternary structure, homohexamer; trimer of disulfide-linked dimers.

It catalyses the reaction alpha-D-glucosamine 6-phosphate + H2O = beta-D-fructose 6-phosphate + NH4(+). It functions in the pathway amino-sugar metabolism; N-acetylneuraminate degradation; D-fructose 6-phosphate from N-acetylneuraminate: step 5/5. With respect to regulation, allosterically activated by N-acetylglucosamine 6-phosphate (GlcNAc6P). In terms of biological role, catalyzes the reversible isomerization-deamination of glucosamine 6-phosphate (GlcN6P) to form fructose 6-phosphate (Fru6P) and ammonium ion. In Shigella boydii serotype 18 (strain CDC 3083-94 / BS512), this protein is Glucosamine-6-phosphate deaminase.